A 178-amino-acid chain; its full sequence is Ribosome maturation factor RimM (178 aa).

In terms of domain architecture, PRC barrel spans 95-174 (EGQHFWFNVI…IVHVKDAKDI (80 aa)).

This sequence belongs to the RimM family. Binds ribosomal protein uS19.

The protein localises to the cytoplasm. Functionally, an accessory protein needed during the final step in the assembly of 30S ribosomal subunit, possibly for assembly of the head region. Essential for efficient processing of 16S rRNA. May be needed both before and after RbfA during the maturation of 16S rRNA. It has affinity for free ribosomal 30S subunits but not for 70S ribosomes. The chain is Ribosome maturation factor RimM from Sulfurovum sp. (strain NBC37-1).